Consider the following 177-residue polypeptide: Large ribosomal subunit protein uL6 (177 aa).

Belongs to the universal ribosomal protein uL6 family. Part of the 50S ribosomal subunit.

In terms of biological role, this protein binds to the 23S rRNA, and is important in its secondary structure. It is located near the subunit interface in the base of the L7/L12 stalk, and near the tRNA binding site of the peptidyltransferase center. The protein is Large ribosomal subunit protein uL6 of Methanococcoides burtonii (strain DSM 6242 / NBRC 107633 / OCM 468 / ACE-M).